Here is a 723-residue protein sequence, read N- to C-terminus: Cyclin-T2 (723 aa).

The interaction with MDFIC and MDFI stretch occupies residues 1–298; sequence MASGRGASSR…SVTGVPANPS (298 aa). A Cyclin N-terminal domain is found at 12–147; the sequence is FFTREQLENT…IMLQTLGFEI (136 aa). The tract at residues 250–298 is interaction with POLR2A; that stretch reads RLKRIRNWRAMAKKPKVDGQVSETPLLGSSLVQNSILVDSVTGVPANPS. 2 stretches are compositionally biased toward polar residues: residues 297 to 307 and 314 to 325; these read PSFQKPSTSTF and NSGSTSVQDSRA. Disordered regions lie at residues 297–325, 340–364, 385–428, and 458–645; these read PSFQ…DSRA, SYSL…VYTQ, ALHS…GMLP, and AEQQ…SSVK. The segment covering 395–409 has biased composition (basic and acidic residues); that stretch reads DKVADHSSAKQEYTH. K404 participates in a covalent cross-link: Glycyl lysine isopeptide (Lys-Gly) (interchain with G-Cter in SUMO2). A Phosphoserine modification is found at S477. Basic and acidic residues-rich tracts occupy residues 489-503, 517-543, and 552-565; these read DRPE…ERSG, GPSK…EGSG, and ISRD…EHPA. Residues 566 to 576 are compositionally biased toward basic residues; it reads NRHHSSHKYLH. Residue S596 is modified to Phosphoserine. A compositionally biased stretch (low complexity) spans 631–645; that stretch reads SSKSAGSSSSSSSVK.

It belongs to the cyclin family. Cyclin C subfamily. Interacts with CDK9 to form P-TEFb. Interacts with POLR2A (via the C-terminal domain (CTD)); mediates transcriptional activity. Interacts with HEXIM1; mediates formation of a tripartite complex with KPNA2. Interacts with HEXIM2. Interacts with PKN1; enhances MYOD1-dependent transcription. P-TEFB complex interacts with RB1; promotes phosphorylation of RB1. P-TEFB complex interacts with MYOD1; promotes the transcriptional activity of MYOD1 through its CDK9-mediated phosphorylation. Interacts with MDFI and MDFIC. In terms of tissue distribution, highly expressed in all phases of skeletal muscle differentiation, particularly in later stages. Highly expressed in skeletal muscle. Significantly expressed in heart, brain, kidney, liver, testis, and pancreas.

Its subcellular location is the cytoplasm. It localises to the perinuclear region. The protein localises to the nucleus. Regulatory subunit of the cyclin-dependent kinase pair (CDK9/cyclin T) complex, also called positive transcription elongation factor B (P-TEFB), which is proposed to facilitate the transition from abortive to production elongation by phosphorylating the CTD (carboxy-terminal domain) of the large subunit of RNA polymerase II (RNAP II). The activity of this complex is regulated by binding with 7SK snRNA. Plays a role during muscle differentiation; P-TEFB complex interacts with MYOD1; this tripartite complex promotes the transcriptional activity of MYOD1 through its CDK9-mediated phosphorylation and binds the chromatin of promoters and enhancers of muscle-specific genes; this event correlates with hyperphosphorylation of the CTD domain of RNA pol II. In addition, enhances MYOD1-dependent transcription through interaction with PKN1. Involved in early embryo development. The sequence is that of Cyclin-T2 from Mus musculus (Mouse).